The sequence spans 651 residues: Sodium/potassium/calcium exchanger 2 (651 aa).

The Cytoplasmic segment spans residues 1–38 (MALCKKTVGSVLEEWCLNEPLFGCKRHQNVRKKLRLIR). The helical transmembrane segment at 39 to 59 (IIGLLVSVVAISTFSLSISAF) threads the bilayer. Residues 60 to 134 (FKMETHSTVL…DLFSLEERRK (75 aa)) lie on the Extracellular side of the membrane. Residues 92–123 (QNEGSTPDSPTSMKHEAEHDNATEEHSKGEYP) form a disordered region. Residues 93 to 103 (NEGSTPDSPTS) show a composition bias toward polar residues. The segment covering 104-122 (MKHEAEHDNATEEHSKGEY) has biased composition (basic and acidic residues). Residue Asn-112 is glycosylated (N-linked (GlcNAc...) asparagine). A helical transmembrane segment spans residues 135 to 155 (GAVILHVIGMIYMFIALAIVC). Residues 156 to 179 (DEFFVPSLTVITEKLSISDDVAGA) are Cytoplasmic-facing. The stretch at 176–216 (VAGATFMAAGGSAPELFTSLIGVFISHSNVGIGTIVGSAVF) is one Alpha-1 repeat. Residues 180 to 200 (TFMAAGGSAPELFTSLIGVFI) form a helical membrane-spanning segment. Residues 201-206 (SHSNVG) lie on the Extracellular side of the membrane. Residues 207-227 (IGTIVGSAVFNILFVIGMCAL) traverse the membrane as a helical segment. Over 228-245 (FSREILNLTWWPLFRDVS) the chain is Cytoplasmic. Residues 246-266 (FYIVDLILLIIFFLDNLIMWW) form a helical membrane-spanning segment. Residues 267 to 459 (ESLTLLTAYF…SLAWPDTPRK (193 aa)) are Extracellular-facing. Positions 304–322 (ATTGDAEGKSPTAGDKDDQ) are enriched in basic and acidic residues. A disordered region spans residues 304 to 338 (ATTGDAEGKSPTAGDKDDQTLTTKPRLQRGGSSAS). Polar residues predominate over residues 323–338 (TLTTKPRLQRGGSSAS). A helical transmembrane segment spans residues 460-480 (QLTYLLVLPIVFPLWVSLPDV). Residues 481–487 (RNPRSRK) are Cytoplasmic-facing. A helical transmembrane segment spans residues 488-508 (FFPITFFGSISWIAFFSYLMV). Residues 509 to 523 (WWAHQVGETIGISEE) lie on the Extracellular side of the membrane. Residues 524 to 544 (IMGLTILAAGTSIPDLITSVI) form a helical membrane-spanning segment. An Alpha-2 repeat occupies 531–562 (AAGTSIPDLITSVIVARKGLGDMAVSSSVGSN). Topologically, residues 545 to 562 (VARKGLGDMAVSSSVGSN) are cytoplasmic. A helical transmembrane segment spans residues 563-583 (IFDITVGLPLPWLLYAVINNF). The Extracellular portion of the chain corresponds to 584 to 592 (SPVTVSSNG). A helical membrane pass occupies residues 593–613 (LFCAIVLLFIMLLFVILSIAF). Residues 614–620 (CKWRMNK) lie on the Cytoplasmic side of the membrane. The chain crosses the membrane as a helical span at residues 621 to 641 (FLGFLMFGLYFVFLIVSVLLE). The Extracellular segment spans residues 642-651 (DKVIQCPVSI).

This sequence belongs to the Ca(2+):cation antiporter (CaCA) (TC 2.A.19) family. SLC24A subfamily. As to expression, retinal cones. Found in the cone inner segment layer and in a subpopulation of ganglion cells.

The protein resides in the cell membrane. It catalyses the reaction Ca(2+)(out) + K(+)(out) + 4 Na(+)(in) = Ca(2+)(in) + K(+)(in) + 4 Na(+)(out). In terms of biological role, calcium, potassium:sodium antiporter that transports 1 Ca(2+) and 1 K(+) in exchange for 4 Na(+). Required for learming and memory by regulating neuronal Ca(2+), which is essential for the development of synaptic plasticity. This is Sodium/potassium/calcium exchanger 2 (SLC24A2) from Gallus gallus (Chicken).